Consider the following 417-residue polypeptide: RH-like protein ID (417 aa).

11 helical membrane passes run 12 to 32, 44 to 64, 77 to 97, 125 to 145, 172 to 192, 203 to 223, 238 to 258, 265 to 285, 287 to 307, 331 to 351, and 358 to 378; these read CLPL…YFFT, LVAS…GFGF, VAFN…LDGF, ISAG…MVLV, IYVF…KPLA, TIPS…WPSF, VFNT…VSSL, INMT…ATSC, LIPS…ISIG, NFSL…VLDT, and MVGF…VIAL.

The protein belongs to the ammonium transporter (TC 2.A.49) family. Rh subfamily.

Its subcellular location is the membrane. Functionally, may be part of an oligomeric complex which is likely to have a transport or channel function in the erythrocyte membrane. In Gorilla gorilla gorilla (Western lowland gorilla), this protein is RH-like protein ID.